Here is a 785-residue protein sequence, read N- to C-terminus: Endonuclease MutS2 (785 aa).

334 to 341 (GPNTGGKT) provides a ligand contact to ATP. Positions 710–785 (LDLRGKRYEE…GNGATIVHFK (76 aa)) constitute a Smr domain.

The protein belongs to the DNA mismatch repair MutS family. MutS2 subfamily. As to quaternary structure, homodimer. Binds to stalled ribosomes, contacting rRNA.

Endonuclease that is involved in the suppression of homologous recombination and thus may have a key role in the control of bacterial genetic diversity. In terms of biological role, acts as a ribosome collision sensor, splitting the ribosome into its 2 subunits. Detects stalled/collided 70S ribosomes which it binds and splits by an ATP-hydrolysis driven conformational change. Acts upstream of the ribosome quality control system (RQC), a ribosome-associated complex that mediates the extraction of incompletely synthesized nascent chains from stalled ribosomes and their subsequent degradation. Probably generates substrates for RQC. This is Endonuclease MutS2 from Pediococcus pentosaceus (strain ATCC 25745 / CCUG 21536 / LMG 10740 / 183-1w).